A 194-amino-acid polypeptide reads, in one-letter code: A-type ATP synthase subunit E (194 aa).

Belongs to the V-ATPase E subunit family. Has multiple subunits with at least A(3), B(3), C, D, E, F, H, I and proteolipid K(x).

The protein localises to the cell membrane. In terms of biological role, component of the A-type ATP synthase that produces ATP from ADP in the presence of a proton gradient across the membrane. This chain is A-type ATP synthase subunit E, found in Saccharolobus solfataricus (strain ATCC 35092 / DSM 1617 / JCM 11322 / P2) (Sulfolobus solfataricus).